The primary structure comprises 335 residues: Tetraacyldisaccharide 4'-kinase (335 aa).

Residue 59 to 66 (TAGGNGKT) coordinates ATP.

Belongs to the LpxK family.

The enzyme catalyses a lipid A disaccharide + ATP = a lipid IVA + ADP + H(+). It participates in glycolipid biosynthesis; lipid IV(A) biosynthesis; lipid IV(A) from (3R)-3-hydroxytetradecanoyl-[acyl-carrier-protein] and UDP-N-acetyl-alpha-D-glucosamine: step 6/6. Transfers the gamma-phosphate of ATP to the 4'-position of a tetraacyldisaccharide 1-phosphate intermediate (termed DS-1-P) to form tetraacyldisaccharide 1,4'-bis-phosphate (lipid IVA). The polypeptide is Tetraacyldisaccharide 4'-kinase (Vibrio cholerae serotype O1 (strain ATCC 39541 / Classical Ogawa 395 / O395)).